We begin with the raw amino-acid sequence, 51 residues long: Methionine aminopeptidase (51 aa).

It belongs to the peptidase M24A family. Methionine aminopeptidase type 1 subfamily. Monomer. It depends on Co(2+) as a cofactor. Requires Zn(2+) as cofactor. The cofactor is Mn(2+). Fe(2+) serves as cofactor.

It catalyses the reaction Release of N-terminal amino acids, preferentially methionine, from peptides and arylamides.. Removes the N-terminal methionine from nascent proteins. The N-terminal methionine is often cleaved when the second residue in the primary sequence is small and uncharged (Met-Ala-, Cys, Gly, Pro, Ser, Thr, or Val). Requires deformylation of the N(alpha)-formylated initiator methionine before it can be hydrolyzed. This Geobacillus stearothermophilus (Bacillus stearothermophilus) protein is Methionine aminopeptidase (map).